Consider the following 455-residue polypeptide: Adenylyltransferase and sulfurtransferase MOCS3 (455 aa).

Residues Gly-90, Asp-111, 118 to 122 (SNLAR), Lys-135, and 179 to 180 (DN) each bind ATP. The interaction with NFS1 stretch occupies residues 156–236 (AQALTPATAL…RPPPAETVTS (81 aa)). Residues Cys-220 and Cys-223 each coordinate Zn(2+). Cys-237 serves as the catalytic Glycyl thioester intermediate; for adenylyltransferase activity. Zn(2+) is bound by residues Cys-295 and Cys-298. A disulfide bridge links Cys-314 with Cys-322. The Rhodanese domain maps to 345-453 (SRSPHLLLDV…WAAKIDGTFP (109 aa)). Cys-410 acts as the Cysteine persulfide intermediate; for sulfurtransferase activity in catalysis. Position 410 is a cysteine persulfide (Cys-410).

The protein in the N-terminal section; belongs to the HesA/MoeB/ThiF family. UBA4 subfamily. Interacts with NFS1. It depends on Zn(2+) as a cofactor.

Its subcellular location is the cytoplasm. It is found in the cytosol. The enzyme catalyses [molybdopterin-synthase sulfur-carrier protein]-C-terminal Gly-Gly + ATP + H(+) = [molybdopterin-synthase sulfur-carrier protein]-C-terminal Gly-Gly-AMP + diphosphate. The catalysed reaction is [molybdopterin-synthase sulfur-carrier protein]-C-terminal Gly-Gly-AMP + S-sulfanyl-L-cysteinyl-[cysteine desulfurase] + AH2 = [molybdopterin-synthase sulfur-carrier protein]-C-terminal-Gly-aminoethanethioate + L-cysteinyl-[cysteine desulfurase] + A + AMP + 2 H(+). Its pathway is tRNA modification; 5-methoxycarbonylmethyl-2-thiouridine-tRNA biosynthesis. It participates in cofactor biosynthesis; molybdopterin biosynthesis. Its function is as follows. Plays a central role in 2-thiolation of mcm(5)S(2)U at tRNA wobble positions of cytosolic tRNA(Lys), tRNA(Glu) and tRNA(Gln). Also essential during biosynthesis of the molybdenum cofactor. Acts by mediating the C-terminal thiocarboxylation of sulfur carriers URM1 and MOCS2A. Its N-terminus first activates URM1 and MOCS2A as acyl-adenylates (-COAMP), then the persulfide sulfur on the catalytic cysteine is transferred to URM1 and MOCS2A to form thiocarboxylation (-COSH) of their C-terminus. The reaction probably involves hydrogen sulfide that is generated from the persulfide intermediate and that acts as a nucleophile towards URM1 and MOCS2A. Subsequently, a transient disulfide bond is formed. Does not use thiosulfate as sulfur donor; NFS1 acting as a sulfur donor for thiocarboxylation reactions. The polypeptide is Adenylyltransferase and sulfurtransferase MOCS3 (Bos taurus (Bovine)).